The following is a 173-amino-acid chain: Photosystem I assembly protein Ycf3 (173 aa).

TPR repeat units lie at residues 35 to 68 (AFVY…EEDP), 72 to 105 (SYIL…NPRM), and 120 to 153 (GEKA…APNN).

It belongs to the Ycf3 family.

It is found in the cellular thylakoid membrane. Essential for the assembly of the photosystem I (PSI) complex. May act as a chaperone-like factor to guide the assembly of the PSI subunits. This Microcystis aeruginosa (strain NIES-843 / IAM M-2473) protein is Photosystem I assembly protein Ycf3.